Consider the following 170-residue polypeptide: MVDTTKNTKLFTSYGVKTSKAITTEVAAKLISKAKRPLFVVGTGVLDPELLDRAVKIAKAKNIPIAATGSSMPGFVDKDVNAKYINLHQLGFYLTDPDWPGLDGNGNYDTIILLGHKKYYINQVLSAVKNFSDVKSISIDRNYIQNATMSFGNLSKADHIAALDEVIDLL.

It belongs to the CdhB family. Heterotetramer of two alpha and two epsilon subunits. The ACDS complex is made up of alpha, epsilon, beta, gamma and delta subunits with a probable stoichiometry of (alpha(2)epsilon(2))(4)-beta(8)-(gamma(1)delta(1))(8).

Its pathway is one-carbon metabolism; methanogenesis from acetate. Functionally, part of a complex that catalyzes the reversible cleavage of acetyl-CoA, allowing growth on acetate as sole source of carbon and energy. The alpha-epsilon subcomponent functions as a carbon monoxide dehydrogenase. The precise role of the epsilon subunit is unclear; it may have a stabilizing role within the alpha(2)epsilon(2) component and/or be involved in electron transfer to FAD during a potential FAD-mediated CO oxidation. The sequence is that of Acetyl-CoA decarbonylase/synthase complex subunit epsilon 2 (cdhB2) from Methanosarcina thermophila.